The following is a 212-amino-acid chain: Thymidylate kinase (212 aa).

11–18 (GPDGAGKT) provides a ligand contact to ATP.

Belongs to the thymidylate kinase family.

The enzyme catalyses dTMP + ATP = dTDP + ADP. Functionally, phosphorylation of dTMP to form dTDP in both de novo and salvage pathways of dTTP synthesis. In Streptococcus mutans serotype c (strain ATCC 700610 / UA159), this protein is Thymidylate kinase.